The primary structure comprises 302 residues: MKRPDYRTLQALDAVIRERGFERAAQKLCITQSAVSQRIKQLENLFGQPLLVRTVPPRPTEQGQKLLALLHQVELLEEEWLGNDNGVDTPLLLSLAVNADSLATWLLPALKPVLADLPIRLNLQVEDETRTQERLRRGEVVGAVSIQPQPLPSCLVDQLGALDYLFVASKAFAERYFPNGVTRSALLKAPAVAFDHLDDMHQAFLQQNFDLSPGSVPCHIVNSSEAFVQLARQGTTCCMIPHLQIEKELASGELIDLTPGLLQRRMLFWHRFAPESRTMRKVTDALLSYGRQVLRQDSFIGQ.

Positions 4–60 constitute an HTH lysR-type domain; the sequence is PDYRTLQALDAVIRERGFERAAQKLCITQSAVSQRIKQLENLFGQPLLVRTVPPRPT. A DNA-binding region (H-T-H motif) is located at residues 21-40; that stretch reads FERAAQKLCITQSAVSQRIK.

It belongs to the LysR transcriptional regulatory family. In terms of assembly, homodimer.

In terms of biological role, controls the transcription of genes involved in arginine and lysine metabolism. The protein is HTH-type transcriptional regulator ArgP of Yersinia pseudotuberculosis serotype O:1b (strain IP 31758).